Consider the following 156-residue polypeptide: Small ribosomal subunit protein uS7 (156 aa).

The protein belongs to the universal ribosomal protein uS7 family. Part of the 30S ribosomal subunit. Contacts proteins S9 and S11.

Functionally, one of the primary rRNA binding proteins, it binds directly to 16S rRNA where it nucleates assembly of the head domain of the 30S subunit. Is located at the subunit interface close to the decoding center, probably blocks exit of the E-site tRNA. The chain is Small ribosomal subunit protein uS7 from Bradyrhizobium sp. (strain BTAi1 / ATCC BAA-1182).